We begin with the raw amino-acid sequence, 221 residues long: 7-cyano-7-deazaguanine synthase (221 aa).

8 to 18 (MSGGMDSTLCA) contributes to the ATP binding site. Zn(2+)-binding residues include Cys187, Cys195, Cys198, and Cys201.

The protein belongs to the QueC family. Zn(2+) is required as a cofactor.

It catalyses the reaction 7-carboxy-7-deazaguanine + NH4(+) + ATP = 7-cyano-7-deazaguanine + ADP + phosphate + H2O + H(+). The protein operates within purine metabolism; 7-cyano-7-deazaguanine biosynthesis. In terms of biological role, catalyzes the ATP-dependent conversion of 7-carboxy-7-deazaguanine (CDG) to 7-cyano-7-deazaguanine (preQ(0)). In Campylobacter concisus (strain 13826), this protein is 7-cyano-7-deazaguanine synthase.